The sequence spans 539 residues: Sorting nexin-27 (539 aa).

The interval 1–40 is disordered; the sequence is MADEDGEGIHPSTPHRNGGGGGGSGLHCAGNGGGGGGGPR. The span at 17 to 39 shows a compositional bias: gly residues; that stretch reads NGGGGGGSGLHCAGNGGGGGGGP. The PDZ domain occupies 41 to 134; it reads VVRIVKSESG…ELILTVLSVP (94 aa). 2 positions are modified to phosphoserine: S49 and S60. In terms of domain architecture, PX spans 159 to 267; sequence QAVPISVPTY…EFLSESDENY (109 aa). The region spanning 271–360 is the Ras-associating domain; it reads SDVELRVALP…TCLTIRKWLF (90 aa). The FERM-like region F1 stretch occupies residues 271 to 360; the sequence is SDVELRVALP…TCLTIRKWLF (90 aa). Residues 371–419 form an FERM-like region F2 region; sequence NDLAVTYFFHQAVDDVKKGYIKAEEKSYQLQKLYEQRKMVMYLNMLRTC. The interval 423 to 523 is FERM-like region F3; it reads NEIIFPHCAC…RVFCELKWRK (101 aa).

As to quaternary structure, core component of the SNX27-retromer, a multiprotein complex composed of SNX27, the WASH complex and the retromer complex. Interacts (via PDZ domain) with a number of target transmembrane proteins (via PDZ-binding motif): ABCC4, ADRB2, ARHGEF7, GRIA1, GRIA2, GRIN1, GRIN2A GRIN2C, KCNJ6, KCNJ9 and SLC2A1/GLUT1. Interacts (via the FERM-like regions) with the WASH complex. Interacts with SNX1. Interacts with CYTIP. Interacts with DGKZ. Interacts with MCC. Interacts (via PDZ domains) with SLC9A3; directs SLC9A3 membrane insertion from early endosomes to the plasma membrane. Isoform 1 is predominantly expressed in the testis, whereas isoform 2 is predominant in various brain regions, including, neocortex, paleocortex, striatum, hippocampus, cerebellum and brain stem. Expressed in cells of hematopoietic origin.

It is found in the early endosome membrane. The protein localises to the cytoplasm. Its subcellular location is the cytosol. Functionally, involved in the retrograde transport from endosome to plasma membrane, a trafficking pathway that promotes the recycling of internalized transmembrane proteins. Following internalization, endocytosed transmembrane proteins are delivered to early endosomes and recycled to the plasma membrane instead of being degraded in lysosomes. SNX27 specifically binds and directs sorting of a subset of transmembrane proteins containing a PDZ-binding motif at the C-terminus: following interaction with target transmembrane proteins, associates with the retromer complex, preventing entry into the lysosomal pathway, and promotes retromer-tubule based plasma membrane recycling. SNX27 also binds with the WASH complex. Interacts with membranes containing phosphatidylinositol-3-phosphate (PtdIns(3P)). May participate in establishment of natural killer cell polarity. Recruits CYTIP to early endosomes. The sequence is that of Sorting nexin-27 (Snx27) from Rattus norvegicus (Rat).